Reading from the N-terminus, the 480-residue chain is Adenosylhomocysteinase (480 aa).

Substrate contacts are provided by Thr63, Asp142, and Glu203. 204–206 (TTT) is an NAD(+) binding site. Substrate is bound by residues Lys233 and Asp237. NAD(+) contacts are provided by residues Asn238, 267–272 (GYGDVG), Glu290, Asn325, 346–348 (IGH), and Asn394.

The protein belongs to the adenosylhomocysteinase family. NAD(+) serves as cofactor.

It localises to the cytoplasm. The catalysed reaction is S-adenosyl-L-homocysteine + H2O = L-homocysteine + adenosine. The protein operates within amino-acid biosynthesis; L-homocysteine biosynthesis; L-homocysteine from S-adenosyl-L-homocysteine: step 1/1. Its function is as follows. May play a key role in the regulation of the intracellular concentration of adenosylhomocysteine. The sequence is that of Adenosylhomocysteinase from Xanthomonas axonopodis pv. citri (strain 306).